Consider the following 703-residue polypeptide: Epidermal growth factor receptor (703 aa).

The first 30 residues, 1 to 30 (MGVRSPLSASGPRGAAVLVLLLLGVALCSA), serve as a signal peptide directing secretion. The Extracellular segment spans residues 31 to 654 (VEEKKVCQGT…GCPNGSKTPS (624 aa)). Cysteines 37 and 64 form a disulfide. N-linked (GlcNAc...) asparagine glycans are attached at residues N134, N190, and N200. 13 cysteine pairs are disulfide-bonded: C164/C194, C197/C206, C201/C214, C222/C230, C226/C238, C239/C247, C243/C255, C258/C267, C271/C298, C302/C314, C318/C333, C336/C340, and C344/C369. N359, N368, and N420 each carry an N-linked (GlcNAc...) asparagine glycan. 11 cysteine pairs are disulfide-bonded: C477–C506, C513–C522, C517–C530, C533–C542, C546–C562, C565–C581, C569–C589, C592–C601, C605–C627, C630–C638, and C634–C646. N-linked (GlcNAc...) asparagine glycosylation is found at N573 and N578. N-linked (GlcNAc...) asparagine glycans are attached at residues N613 and N633. N648 is a glycosylation site (N-linked (GlcNAc...) asparagine). Residues 655-667 (IAAGVVGGLLCLV) form a helical membrane-spanning segment. The Cytoplasmic segment spans residues 668 to 703 (VVGLGIGLYLRRRHIVRKRTLRRLLQERELVEPLTP). T687 and T702 each carry phosphothreonine.

The protein belongs to the protein kinase superfamily. Tyr protein kinase family. EGF receptor subfamily. As to quaternary structure, binding of the ligand triggers homo- and/or heterodimerization of the receptor triggering its autophosphorylation. Phosphorylated. Autophosphorylates.

Its subcellular location is the cell membrane. The protein resides in the endoplasmic reticulum membrane. It is found in the golgi apparatus membrane. The protein localises to the nucleus membrane. It localises to the endosome. Its subcellular location is the endosome membrane. The protein resides in the nucleus. It carries out the reaction L-tyrosyl-[protein] + ATP = O-phospho-L-tyrosyl-[protein] + ADP + H(+). Endocytosis and inhibition of the activated EGFR by phosphatases constitute immediate regulatory mechanisms. Moreover, inducible feedback inhibitors may constitute alternative regulatory mechanisms for the EGFR signaling. In terms of biological role, receptor tyrosine kinase binding ligands of the EGF family and activating several signaling cascades to convert extracellular cues into appropriate cellular responses. Known ligands include EGF and TGFA/TGF-alpha. Ligand binding triggers receptor homo- and/or heterodimerization and autophosphorylation on key cytoplasmic residues. The phosphorylated receptor recruits adapter proteins like GRB2 which in turn activates complex downstream signaling cascades. Activates at least 4 major downstream signaling cascades including the RAS-RAF-MEK-ERK, PI3 kinase-AKT, PLCgamma-PKC and STATs modules. May also activate the NF-kappa-B signaling cascade. This chain is Epidermal growth factor receptor (EGFR), found in Gallus gallus (Chicken).